The following is a 32-amino-acid chain: Parigidin-br1 (32 aa).

Positions 1 to 32 form a cross-link, cyclopeptide (Gly-Asp); sequence GGSVPCGESCVFIPCITSLAGCSCKNKVCYYD. 3 disulfide bridges follow: Cys-6–Cys-22, Cys-10–Cys-24, and Cys-15–Cys-29.

This is a cyclic peptide. As to expression, expressed in leaves, flowers, peduncles and seeds (at protein level).

Its function is as follows. Probably participates in a plant defense mechanism. Reduces growth of and increases mortality in larvae of D.saccharalis. Kills cultured SF-9 cells of S.frugiperda probably by disrupting plasma membranes. Has hemolytic activity against human erythrocytes. Has no antibacterial activity against E.coli strain ATCC 8739 and S.aureus strain ATCC 25923. This is Parigidin-br1 from Palicourea rigida.